Consider the following 361-residue polypeptide: Caveolae-associated protein 4 (361 aa).

A disordered region spans residues 1-21 (MEHNGSASNADKIHQNRLSNV). A coiled-coil region spans residues 100–124 (IKDVKARVEKQQTHVKKVEAKQEEI). Residues Ser152, Ser171, and Ser172 each carry the phosphoserine modification. The stretch at 204-248 (ENMQKTRQNFDKKVNRIRTRIVTPERRERLRQSGERLRQSGERLK) forms a coiled coil. Positions 230–255 (RERLRQSGERLRQSGERLKQSGERFK) are enriched in basic and acidic residues. Disordered stretches follow at residues 230–283 (RERL…AVAE) and 310–346 (PEAL…FKPQ). Thr335 carries the phosphothreonine modification. At Ser354 the chain carries Phosphoserine.

This sequence belongs to the CAVIN family. As to quaternary structure, component of the CAVIN complex composed of CAVIN1, CAVIN2, CAVIN3 and CAVIN4. Interacts with CAVIN1, ADRA1A, ADRA1B, MAPK1 and MAPK3. Interacts with CAVIN2; this augments the transactivation of NPPA.

It is found in the cytoplasm. It localises to the myofibril. Its subcellular location is the sarcomere. The protein resides in the cytosol. The protein localises to the cell membrane. It is found in the sarcolemma. It localises to the membrane. Its subcellular location is the caveola. In terms of biological role, modulates the morphology of formed caveolae in cardiomyocytes, but is not required for caveolar formation. Facilitates the recruitment of MAPK1/3 to caveolae within cardiomyocytes and regulates alpha-1 adrenergic receptor-induced hypertrophic responses in cardiomyocytes through MAPK1/3 activation. Contributes to proper membrane localization and stabilization of caveolin-3 (CAV3) in cardiomyocytes. Induces RHOA activation and activates NPPA transcription and myofibrillar organization through the Rho/ROCK signaling pathway. The protein is Caveolae-associated protein 4 (CAVIN4) of Bos taurus (Bovine).